Reading from the N-terminus, the 459-residue chain is Glycerol-3-phosphate acyltransferase, chloroplastic (459 aa).

The transit peptide at 1 to 90 (MTLTFSSSAA…FNEAAGETPS (90 aa)) directs the protein to the chloroplast. An HXXXXD motif motif is present at residues 229 to 234 (HQSEAD).

This sequence belongs to the GPAT/DAPAT family.

The protein localises to the plastid. It localises to the chloroplast stroma. The catalysed reaction is sn-glycerol 3-phosphate + an acyl-CoA = a 1-acyl-sn-glycero-3-phosphate + CoA. The protein operates within phospholipid metabolism; CDP-diacylglycerol biosynthesis; CDP-diacylglycerol from sn-glycerol 3-phosphate: step 1/3. Its function is as follows. Esterifies acyl-group from acyl-ACP to the sn-1 position of glycerol-3-phosphate. The enzyme from chilling-resistant plants discriminates against non-fluid palmitic acid and selects oleic acid whereas the enzyme from sensitive plants accepts both fatty acids. This is an oleate-selective acyltransferase. In Arabidopsis thaliana (Mouse-ear cress), this protein is Glycerol-3-phosphate acyltransferase, chloroplastic (ATS1).